Here is a 213-residue protein sequence, read N- to C-terminus: Putative transmembrane protein DDB_G0267860 (213 aa).

The first 22 residues, 1-22 (MKTKILLLNFIIIFFLINVNLA), serve as a signal peptide directing secretion. Over 23–191 (IKKDSPFKEI…SSKFDSSTSS (169 aa)) the chain is Extracellular. N-linked (GlcNAc...) asparagine glycosylation is found at asparagine 92 and asparagine 114. The helical transmembrane segment at 192 to 212 (ISINTLAILSLLFLIFINKLI) threads the bilayer. A topological domain (cytoplasmic) is located at residue asparagine 213.

Its subcellular location is the membrane. This chain is Putative transmembrane protein DDB_G0267860, found in Dictyostelium discoideum (Social amoeba).